Here is a 263-residue protein sequence, read N- to C-terminus: MTMPLYASPEQILRDRSEYARKGISRGRSVVVLRYADGVLFVAENPSSTLHKVSEIYDRIGFAAVGRYSEFENLRQAGIRFADVRGYQNDPRDVTGRSLANVYAQTLGSIFTEQIKPLEVEICVAEVGHTPEHDTLYRLTYDGSIVEEPQHSVMGGQAETTATALKESYEEGLPLAAALRVAVKALSAGSASTGNGKPELLEAANLEAAVLERDRPRRAFRRLKGTALAALLQDTPPDDADADADAGKKPANDGNLPPNDDKS.

Residues alanine 229 to serine 263 are disordered.

The protein belongs to the peptidase T1A family. The 20S proteasome core is composed of 14 alpha and 14 beta subunits that assemble into four stacked heptameric rings, resulting in a barrel-shaped structure. The two inner rings, each composed of seven catalytic beta subunits, are sandwiched by two outer rings, each composed of seven alpha subunits. The catalytic chamber with the active sites is on the inside of the barrel. Has a gated structure, the ends of the cylinder being occluded by the N-termini of the alpha-subunits. Is capped by the proteasome-associated ATPase, ARC.

The protein resides in the cytoplasm. It participates in protein degradation; proteasomal Pup-dependent pathway. Its activity is regulated as follows. The formation of the proteasomal ATPase ARC-20S proteasome complex, likely via the docking of the C-termini of ARC into the intersubunit pockets in the alpha-rings, may trigger opening of the gate for substrate entry. Interconversion between the open-gate and close-gate conformations leads to a dynamic regulation of the 20S proteasome proteolysis activity. Functionally, component of the proteasome core, a large protease complex with broad specificity involved in protein degradation. The polypeptide is Proteasome subunit alpha (Actinosynnema mirum (strain ATCC 29888 / DSM 43827 / JCM 3225 / NBRC 14064 / NCIMB 13271 / NRRL B-12336 / IMRU 3971 / 101)).